We begin with the raw amino-acid sequence, 710 residues long: Polyribonucleotide nucleotidyltransferase (710 aa).

Mg(2+)-binding residues include Asp-489 and Asp-495. The 60-residue stretch at 556–615 (PKIDTIKIDVDKIKVVIGKGGETIDKIIAETGVKIDIDDEGNVSIYSSDQAAIDRTKEII) folds into the KH domain. The 69-residue stretch at 625–693 (GEVYHAKVIR…EKGRVDASMK (69 aa)) folds into the S1 motif domain.

This sequence belongs to the polyribonucleotide nucleotidyltransferase family. Mg(2+) serves as cofactor.

Its subcellular location is the cytoplasm. It carries out the reaction RNA(n+1) + phosphate = RNA(n) + a ribonucleoside 5'-diphosphate. Involved in mRNA degradation. Catalyzes the phosphorolysis of single-stranded polyribonucleotides processively in the 3'- to 5'-direction. This Streptococcus pyogenes serotype M3 (strain ATCC BAA-595 / MGAS315) protein is Polyribonucleotide nucleotidyltransferase.